The sequence spans 368 residues: MIYYLLRYINDLFDLPGLHVIEYLTFRASAAAITALLITLFVGPGFIKYLKTRFIEPVKEEAPPEHKKKNKLPTMGGLLIIFSIEISVLLWSKFIDPHVWLIMLAILWMGIIGFIDDYRKVVLKIKGGLSARYKLIGQVTLGLVVGCYTWYDPSFSVLLSTTTVPFFKYLTIDYGYFYIPIVIFIITAVSNAVNLTDGLDGLAAGSSAIVVMGLGGFSYLAGNAVYAVYLNIPFIPGGGEIAVVSMAIVMACVGFLWFNSNPAEIIMGDTGSLALGSAIAVIALLIKQELLLPLIAGIFFLETLSVSLQVLYFKYTKMRYGQGKRIFLMAPLHHHFQLKGWAEQKIVIRFWILTILFFLASLMTLKLR.

9 helical membrane passes run Ala30–Leu50, Leu72–Ser92, Ile95–Ile115, Val139–Leu159, Tyr169–Val189, Ala208–Val228, Gly238–Phe258, Glu264–Ile286, and Lys345–Leu365.

Belongs to the glycosyltransferase 4 family. MraY subfamily. Mg(2+) serves as cofactor.

The protein localises to the cell inner membrane. The enzyme catalyses UDP-N-acetyl-alpha-D-muramoyl-L-alanyl-gamma-D-glutamyl-meso-2,6-diaminopimeloyl-D-alanyl-D-alanine + di-trans,octa-cis-undecaprenyl phosphate = di-trans,octa-cis-undecaprenyl diphospho-N-acetyl-alpha-D-muramoyl-L-alanyl-D-glutamyl-meso-2,6-diaminopimeloyl-D-alanyl-D-alanine + UMP. Its pathway is cell wall biogenesis; peptidoglycan biosynthesis. In terms of biological role, catalyzes the initial step of the lipid cycle reactions in the biosynthesis of the cell wall peptidoglycan: transfers peptidoglycan precursor phospho-MurNAc-pentapeptide from UDP-MurNAc-pentapeptide onto the lipid carrier undecaprenyl phosphate, yielding undecaprenyl-pyrophosphoryl-MurNAc-pentapeptide, known as lipid I. The polypeptide is Phospho-N-acetylmuramoyl-pentapeptide-transferase (Pelodictyon phaeoclathratiforme (strain DSM 5477 / BU-1)).